Consider the following 420-residue polypeptide: UDP-N-acetylglucosamine 1-carboxyvinyltransferase (420 aa).

22-23 is a phosphoenolpyruvate binding site; the sequence is KN. UDP-N-acetyl-alpha-D-glucosamine is bound at residue arginine 94. Residue cysteine 118 is the Proton donor of the active site. Cysteine 118 is subject to 2-(S-cysteinyl)pyruvic acid O-phosphothioketal. Positions 307 and 329 each coordinate UDP-N-acetyl-alpha-D-glucosamine.

Belongs to the EPSP synthase family. MurA subfamily.

The protein localises to the cytoplasm. The catalysed reaction is phosphoenolpyruvate + UDP-N-acetyl-alpha-D-glucosamine = UDP-N-acetyl-3-O-(1-carboxyvinyl)-alpha-D-glucosamine + phosphate. Its pathway is cell wall biogenesis; peptidoglycan biosynthesis. In terms of biological role, cell wall formation. Adds enolpyruvyl to UDP-N-acetylglucosamine. The polypeptide is UDP-N-acetylglucosamine 1-carboxyvinyltransferase (Granulibacter bethesdensis (strain ATCC BAA-1260 / CGDNIH1)).